The primary structure comprises 716 residues: Amino-acid acetyltransferase, mitochondrial (716 aa).

The transit peptide at 1 to 44 directs the protein to the mitochondrion; that stretch reads MSPHTGWPRTVNSSLLKKHRSSLCTCQHTSSFLPRSFSTTADRH. 2 disordered regions span residues 99–119 and 487–508; these read YPKS…APTL and LSSS…TVYP. Residues 102–112 are compositionally biased toward basic and acidic residues; it reads SPDENKPEPEK. Residues 497–508 are compositionally biased toward polar residues; that stretch reads GPTNNGQGTVYP. Positions 537–706 constitute an N-acetyltransferase domain; the sequence is SRPRLKLDDP…YEAVCRSTQP (170 aa).

Belongs to the acetyltransferase family.

It localises to the mitochondrion. The enzyme catalyses L-glutamate + acetyl-CoA = N-acetyl-L-glutamate + CoA + H(+). It functions in the pathway amino-acid biosynthesis; L-arginine biosynthesis; N(2)-acetyl-L-ornithine from L-glutamate: step 1/4. Its function is as follows. N-acetylglutamate synthase involved in arginine biosynthesis. The sequence is that of Amino-acid acetyltransferase, mitochondrial (arg2) from Neosartorya fischeri (strain ATCC 1020 / DSM 3700 / CBS 544.65 / FGSC A1164 / JCM 1740 / NRRL 181 / WB 181) (Aspergillus fischerianus).